We begin with the raw amino-acid sequence, 463 residues long: A-type ATP synthase subunit B (463 aa).

The protein belongs to the ATPase alpha/beta chains family. Has multiple subunits with at least A(3), B(3), C, D, E, F, H, I and proteolipid K(x).

It localises to the cell membrane. In terms of biological role, component of the A-type ATP synthase that produces ATP from ADP in the presence of a proton gradient across the membrane. The B chain is a regulatory subunit. This chain is A-type ATP synthase subunit B, found in Thermococcus gammatolerans (strain DSM 15229 / JCM 11827 / EJ3).